A 335-amino-acid chain; its full sequence is Malate dehydrogenase 1 (335 aa).

NAD(+)-binding positions include 11 to 16 (GAGNVG) and Asp-35. Positions 97 and 103 each coordinate substrate. Residues Asn-110 and 133-135 (VTN) each bind NAD(+). Substrate is bound by residues Asn-135 and Arg-166. His-190 acts as the Proton acceptor in catalysis.

The protein belongs to the LDH/MDH superfamily. MDH type 3 family.

The enzyme catalyses (S)-malate + NAD(+) = oxaloacetate + NADH + H(+). Its function is as follows. Catalyzes the reversible oxidation of malate to oxaloacetate. This Aquifex aeolicus (strain VF5) protein is Malate dehydrogenase 1 (mdh1).